A 494-amino-acid chain; its full sequence is Ammonium transporter Rh type C (494 aa).

Topologically, residues 1-22 (MGNFIQGCKDYFSQQKNTNIRL) are cytoplasmic. The helical transmembrane segment at 23-43 (TLPVVCFVWQIAMIILFGVFI) threads the bilayer. Residues 44–74 (RYDEESDTHWVETKAHDNITSDIENDFYFRY) are Extracellular-facing. Asn-61 is a glycosylation site (N-linked (GlcNAc...) asparagine). A helical transmembrane segment spans residues 75-95 (PSFQDVHVMIFVGFGFLMTFL). The Cytoplasmic portion of the chain corresponds to 96–99 (KRYS). The chain crosses the membrane as a helical span at residues 100 to 120 (FGAVGFNFLIASFGLQWALLM). Residues 121-133 (QGWFHSLDPQTGK) are Extracellular-facing. Residues 134–154 (IFIGVESLINADFCVAGCLIA) form a helical membrane-spanning segment. Residues 155–166 (YGAVLGKVSPVQ) lie on the Cytoplasmic side of the membrane. The helical transmembrane segment at 167-187 (LLVMTLFGVTLFAVEEYIILN) threads the bilayer. The Extracellular portion of the chain corresponds to 188 to 194 (LLHARDA). Residues 195–215 (GGSMVIHTFGGYYGLTISWVL) traverse the membrane as a helical segment. Residues 216 to 234 (YRPNLHQSKRMQGSVYHSD) lie on the Cytoplasmic side of the membrane. A helical membrane pass occupies residues 235-255 (IFAMIGTLFLWMFWPSFNSAI). At 256 to 265 (TDHGDGQHRA) the chain is on the extracellular side. The chain crosses the membrane as a helical span at residues 266–286 (VINTYLCLASTVLTTVAISSF). Residues 287-297 (SQKTGKLDMVH) are Cytoplasmic-facing. Residues 298–318 (IQNSTLAGGVALGTAAEFMIS) form a helical membrane-spanning segment. Position 319 (Pro-319) is a topological domain, extracellular. The helical transmembrane segment at 320 to 340 (YGALIVGFLCGIISTMGYIFI) threads the bilayer. The Cytoplasmic segment spans residues 341 to 358 (SPFLEKTLKIQDTCGIHN). A helical transmembrane segment spans residues 359–379 (LHAMPGVIGGIVGAITAAAAS). Over 380–411 (ESVYGKHALINTFDFTGDFKDRTVLTQGGYQA) the chain is Extracellular. Residues 412–432 (AGMCVSIVFGVAGGAIVGSIL) traverse the membrane as a helical segment. The Cytoplasmic segment spans residues 433–494 (KLPIWGDPAD…SNFSVEHCES (62 aa)).

Belongs to the ammonium transporter (TC 2.A.49) family. Rh subfamily. Homotrimer.

The protein localises to the apical cell membrane. Its function is as follows. Functions as an ammonia transporter. May play a role in the elimination of ammonia in the gill. This chain is Ammonium transporter Rh type C (rhcg), found in Oncorhynchus mykiss (Rainbow trout).